Reading from the N-terminus, the 86-residue chain is Anti-adapter protein IraP (86 aa).

The stretch at 1-38 (MKNLIAELLVKLAQKEEEAKELTVQVEALEIVVTALLR) forms a coiled coil.

Belongs to the IraP family. In terms of assembly, interacts with RssB.

It localises to the cytoplasm. In terms of biological role, inhibits RpoS proteolysis by regulating RssB activity, thereby increasing the stability of the sigma stress factor RpoS especially during phosphate starvation, but also in stationary phase and during nitrogen starvation. Its effect on RpoS stability is due to its interaction with RssB, which probably blocks the interaction of RssB with RpoS, and the consequent delivery of the RssB-RpoS complex to the ClpXP protein degradation pathway. This Klebsiella pneumoniae subsp. pneumoniae (strain ATCC 700721 / MGH 78578) protein is Anti-adapter protein IraP.